A 238-amino-acid chain; its full sequence is Uridylate kinase (238 aa).

ATP is bound at residue 12 to 15 (KLSG). Residue G54 participates in UMP binding. ATP is bound by residues G55 and R59. UMP contacts are provided by residues D74 and 135–142 (TGNPFFTT). 3 residues coordinate ATP: T162, Y168, and D171.

This sequence belongs to the UMP kinase family. Homohexamer.

The protein localises to the cytoplasm. It carries out the reaction UMP + ATP = UDP + ADP. The protein operates within pyrimidine metabolism; CTP biosynthesis via de novo pathway; UDP from UMP (UMPK route): step 1/1. Inhibited by UTP. Catalyzes the reversible phosphorylation of UMP to UDP. The polypeptide is Uridylate kinase (Bordetella bronchiseptica (strain ATCC BAA-588 / NCTC 13252 / RB50) (Alcaligenes bronchisepticus)).